Here is a 140-residue protein sequence, read N- to C-terminus: Protein NrdI (140 aa).

The protein belongs to the NrdI family.

In terms of biological role, probably involved in ribonucleotide reductase function. The protein is Protein NrdI of Ruegeria sp. (strain TM1040) (Silicibacter sp.).